A 212-amino-acid chain; its full sequence is ATP phosphoribosyltransferase (212 aa).

Belongs to the ATP phosphoribosyltransferase family. Short subfamily. In terms of assembly, heteromultimer composed of HisG and HisZ subunits.

The protein resides in the cytoplasm. The catalysed reaction is 1-(5-phospho-beta-D-ribosyl)-ATP + diphosphate = 5-phospho-alpha-D-ribose 1-diphosphate + ATP. It functions in the pathway amino-acid biosynthesis; L-histidine biosynthesis; L-histidine from 5-phospho-alpha-D-ribose 1-diphosphate: step 1/9. Catalyzes the condensation of ATP and 5-phosphoribose 1-diphosphate to form N'-(5'-phosphoribosyl)-ATP (PR-ATP). Has a crucial role in the pathway because the rate of histidine biosynthesis seems to be controlled primarily by regulation of HisG enzymatic activity. In Citrifermentans bemidjiense (strain ATCC BAA-1014 / DSM 16622 / JCM 12645 / Bem) (Geobacter bemidjiensis), this protein is ATP phosphoribosyltransferase.